The primary structure comprises 383 residues: Na(+)/H(+) antiporter NhaA (383 aa).

The next 11 membrane-spanning stretches (helical) occupy residues 10-30 (LIGG…NNSP), 56-76 (LMHW…GLEI), 91-111 (IITP…IYLS), 121-141 (GWAI…ALLG), 150-170 (LLVI…IAIF), 174-194 (SLSL…IICN), 206-226 (VVLG…ATLA), 254-274 (PWII…ISFS), 289-308 (IIWG…LAVF), 327-347 (GISL…VLAF), and 355-375 (AIKI…YIVL).

Belongs to the NhaA Na(+)/H(+) (TC 2.A.33) antiporter family.

The protein resides in the cell inner membrane. It carries out the reaction Na(+)(in) + 2 H(+)(out) = Na(+)(out) + 2 H(+)(in). Functionally, na(+)/H(+) antiporter that extrudes sodium in exchange for external protons. The protein is Na(+)/H(+) antiporter NhaA of Francisella tularensis subsp. tularensis (strain WY96-3418).